A 252-amino-acid chain; its full sequence is 3-dehydroquinate dehydratase (252 aa).

3-dehydroquinate contacts are provided by residues Ser21, 46–48 (EWR), and Arg82. Catalysis depends on His143, which acts as the Proton donor/acceptor. Lys170 serves as the catalytic Schiff-base intermediate with substrate. Arg213, Ser232, and Gln236 together coordinate 3-dehydroquinate.

The protein belongs to the type-I 3-dehydroquinase family. Homodimer.

The catalysed reaction is 3-dehydroquinate = 3-dehydroshikimate + H2O. Its pathway is metabolic intermediate biosynthesis; chorismate biosynthesis; chorismate from D-erythrose 4-phosphate and phosphoenolpyruvate: step 3/7. Its function is as follows. Involved in the third step of the chorismate pathway, which leads to the biosynthesis of aromatic amino acids. Catalyzes the cis-dehydration of 3-dehydroquinate (DHQ) and introduces the first double bond of the aromatic ring to yield 3-dehydroshikimate. The protein is 3-dehydroquinate dehydratase of Shigella sonnei (strain Ss046).